The following is a 1057-amino-acid chain: MPKRDDIQTILVVGSGPIIIGQAAEFDYAGTQACLALKEEGYRVILVNSNPATIMTDKEIADKVYIEPLTHDFIARIIRKEQPDALLPTLGGQTGLNMAIQLHDSGVLEANNVKLLGTELESIQQAEDREMFRTLMNDLNVPVPESDIVNTVEQAFEFKEQVGYPLIVRPAFTMGGTGGGICHNDAELKEVVSNGLHYSPATQCLIEKSIAGYKEIEYEVMRDKNDNAIVVCNMENIDPVGIHTGDSIVVAPSQTLSDVEYQMLRDVSLKVIRALGIEGGCNVQLALDPHSLNYYIIEVNPRVSRSSALASKATGYPIAKLAAKIAVGLTLDEMLNPITGTSYAAFEPTLDYVISKIPRFPFDKFEKGERELGTQMKATGEVMAIGRTYEESLLKAIRSLEYGVHHLGLPNGESYELDYIKERIGHQDDERLFFIGEAIRRGTSLEELHNMTKIDYFFLNKFQNIIDIEHELKNHQGDLEYLKYAKDYGFSDKVIAHRWDMEEKDIYELRMSQNIKPVYKMVDTCAAEFESTTPYYYGTYEDENESIVTDKEKILVLGSGPIRIGQGVEFDYATVHAVWAIQNAGYEAIIVNNNPETVSTDFSISDKLYFEPLTEEDVMNIINLEQPKGVVVQFGGQTAINLADKLAQHGVKILGTSLEDLNRAEDRKEFEALLREISVPQPQGKTATSPKEALKNAREIGYPVVVRPSYVLGGRAMEIVDNDQELENYMTQAVKASPEHPVLVDRYLTGKEIEVDAISDGETVVIPGIMEHIERAGVHSGDSIAVYPPQTLTQDEINTLEDYTIKLAKGLNIKGLINIQFVIAHDGVYVLEVNPRSSRTVPFLSKITDIQMAQLAMRAIMGETLAEMGYKQGIQPYSEGVYVKAPVFSFNKLKNVDITLGPEMKSTGEVMGKDLTLEKALYKGLTGSGFEVKDHGTVLMTVSDKDKDEIVKIAHRLNEIGYKILATRGTAQKLKDHNIPVEVVGKIGGEDDLLTRIQNGEVQIVINTMTKGKEIERDGFQIRRTTVENGVPCLTSLDTASALTNVIESMTFTMRNV.

The segment at 1 to 401 (MPKRDDIQTI…SLLKAIRSLE (401 aa)) is carboxyphosphate synthetic domain. Residues arginine 129, arginine 169, glycine 175, glycine 176, lysine 208, isoleucine 210, glutamate 215, glycine 241, isoleucine 242, histidine 243, glutamine 284, and glutamate 298 each coordinate ATP. The ATP-grasp 1 domain maps to 133 to 327 (RTLMNDLNVP…IAKLAAKIAV (195 aa)). Residues glutamine 284, glutamate 298, and asparagine 300 each contribute to the Mg(2+) site. Positions 284, 298, and 300 each coordinate Mn(2+). The oligomerization domain stretch occupies residues 402–546 (YGVHHLGLPN…YGTYEDENES (145 aa)). The interval 547–929 (IVTDKEKILV…ALYKGLTGSG (383 aa)) is carbamoyl phosphate synthetic domain. The ATP-grasp 2 domain maps to 671-861 (EALLREISVP…MAQLAMRAIM (191 aa)). ATP contacts are provided by arginine 707, arginine 746, leucine 748, glutamate 752, glycine 777, valine 778, histidine 779, serine 780, glutamine 820, and glutamate 832. Residues glutamine 820, glutamate 832, and asparagine 834 each coordinate Mg(2+). Residues glutamine 820, glutamate 832, and asparagine 834 each coordinate Mn(2+). Positions 930 to 1057 (FEVKDHGTVL…ESMTFTMRNV (128 aa)) constitute an MGS-like domain. The interval 930–1057 (FEVKDHGTVL…ESMTFTMRNV (128 aa)) is allosteric domain.

This sequence belongs to the CarB family. Composed of two chains; the small (or glutamine) chain promotes the hydrolysis of glutamine to ammonia, which is used by the large (or ammonia) chain to synthesize carbamoyl phosphate. Tetramer of heterodimers (alpha,beta)4. Mg(2+) is required as a cofactor. It depends on Mn(2+) as a cofactor.

It carries out the reaction hydrogencarbonate + L-glutamine + 2 ATP + H2O = carbamoyl phosphate + L-glutamate + 2 ADP + phosphate + 2 H(+). It catalyses the reaction hydrogencarbonate + NH4(+) + 2 ATP = carbamoyl phosphate + 2 ADP + phosphate + 2 H(+). It functions in the pathway amino-acid biosynthesis; L-arginine biosynthesis; carbamoyl phosphate from bicarbonate: step 1/1. It participates in pyrimidine metabolism; UMP biosynthesis via de novo pathway; (S)-dihydroorotate from bicarbonate: step 1/3. Functionally, large subunit of the glutamine-dependent carbamoyl phosphate synthetase (CPSase). CPSase catalyzes the formation of carbamoyl phosphate from the ammonia moiety of glutamine, carbonate, and phosphate donated by ATP, constituting the first step of 2 biosynthetic pathways, one leading to arginine and/or urea and the other to pyrimidine nucleotides. The large subunit (synthetase) binds the substrates ammonia (free or transferred from glutamine from the small subunit), hydrogencarbonate and ATP and carries out an ATP-coupled ligase reaction, activating hydrogencarbonate by forming carboxy phosphate which reacts with ammonia to form carbamoyl phosphate. The chain is Carbamoyl phosphate synthase large chain from Staphylococcus epidermidis (strain ATCC 35984 / DSM 28319 / BCRC 17069 / CCUG 31568 / BM 3577 / RP62A).